The following is a 182-amino-acid chain: MKLTSTAALASLAVAATAAPSTPETFGLVAIRSGDAVQYAGFNAALGSIFAGLPKQNATCEGTDSGFATFYIKDGALYLYGSEETQEIYVDRSGMGQGLIGYTTGDNASGPRNSERTGWSIDENNHLVFDGNSLIACPNSIDSAYSIWASAGVANPGGNKDCVGIAARVEKTENPIACTYSS.

The signal sequence occupies residues 1-18 (MKLTSTAALASLAVAATA). Residues N57 and N107 are each glycosylated (N-linked (GlcNAc...) asparagine).

It belongs to the phiA family. As to expression, mainly present in phialides and conidia.

The protein localises to the secreted. It localises to the cell wall. In terms of biological role, cell wall protein involved in development of asexual structures such as phialide and conidium development, and thus required for spore formation. Plays a role as a general stress protectant produced by the fungus in competition with antagonistic bacteria. The protein is Cell wall protein phiA of Emericella nidulans (strain FGSC A4 / ATCC 38163 / CBS 112.46 / NRRL 194 / M139) (Aspergillus nidulans).